A 291-amino-acid polypeptide reads, in one-letter code: MGKDVPLLVASAPSLMAQAKEMMEGYTLKARKGLGQHFLISQGVLNKILAAADLKPTDTVIEVGPGLGVLTEELLKRAGQVIAVEVDDKLIDALTEKFKGYPNFRLIHSDILKTSPEEILGQNVPYKLVANLPYYITSAVLRQFLEAKLKPESMVVMVQKEVAKNIVAKTGDMGLLTLSIRFYGNPSLVSVVPGGAFYPPPEVDSAIVKIVIPQTTIMEGVSEVDFFKLARAGFGTRRKTLLNALAQGLGISKPVILSLLNGAGIDPARRAETLSMEEWKKLCLEYAGNPC.

Positions 37, 39, 64, 85, 110, and 131 each coordinate S-adenosyl-L-methionine.

This sequence belongs to the class I-like SAM-binding methyltransferase superfamily. rRNA adenine N(6)-methyltransferase family. RsmA subfamily.

The protein localises to the cytoplasm. It catalyses the reaction adenosine(1518)/adenosine(1519) in 16S rRNA + 4 S-adenosyl-L-methionine = N(6)-dimethyladenosine(1518)/N(6)-dimethyladenosine(1519) in 16S rRNA + 4 S-adenosyl-L-homocysteine + 4 H(+). Functionally, specifically dimethylates two adjacent adenosines (A1518 and A1519) in the loop of a conserved hairpin near the 3'-end of 16S rRNA in the 30S particle. May play a critical role in biogenesis of 30S subunits. This Dehalococcoides mccartyi (strain ATCC BAA-2100 / JCM 16839 / KCTC 5957 / BAV1) protein is Ribosomal RNA small subunit methyltransferase A.